Consider the following 379-residue polypeptide: Putative glutamate--cysteine ligase 2 (379 aa).

This sequence belongs to the glutamate--cysteine ligase type 2 family. YbdK subfamily.

The catalysed reaction is L-cysteine + L-glutamate + ATP = gamma-L-glutamyl-L-cysteine + ADP + phosphate + H(+). Functionally, ATP-dependent carboxylate-amine ligase which exhibits weak glutamate--cysteine ligase activity. This chain is Putative glutamate--cysteine ligase 2, found in Roseiflexus sp. (strain RS-1).